Reading from the N-terminus, the 82-residue chain is uncharacterized protein (82 aa).

3 helical membrane-spanning segments follow: residues 4-26 (IAVL…AGHF), 31-50 (FWVA…VTLA), and 55-77 (SFIF…TLFL).

The protein resides in the cell membrane. This is an uncharacterized protein from Bacillus subtilis (strain 168).